We begin with the raw amino-acid sequence, 307 residues long: Ras-related protein RabR (307 aa).

Positions 1–10 (MTTTTLLSES) are enriched in polar residues. Residues 1 to 45 (MTTTTLLSESTNNSNNTNNNTNNNTNNTMNNNNNNNNNNTIGNNN) are disordered. A compositionally biased stretch (low complexity) spans 11–45 (TNNSNNTNNNTNNNTNNTMNNNNNNNNNNTIGNNN). 61–68 (GDEEVGKG) is a binding site for GTP. The Effector region motif lies at 83-92 (ENLYNIEVDR). 122 to 126 (NFHMH) contributes to the GTP binding site. Positions 175–185 (NFNCQSNSRNS) are enriched in low complexity. The interval 175 to 223 (NFNCQSNSRNSTNYNRHSVGNHCPNSPQKGEKENNTHSSTAPPAPPPLP) is disordered. The span at 186–202 (TNYNRHSVGNHCPNSPQ) shows a compositional bias: polar residues. 230-233 (NKCD) provides a ligand contact to GTP. Cys304 bears the Cysteine methyl ester mark. Cys304 carries S-geranylgeranyl cysteine lipidation. A propeptide spans 305–307 (NLM) (removed in mature form).

This sequence belongs to the small GTPase superfamily. Rab family.

Its subcellular location is the cell membrane. In Dictyostelium discoideum (Social amoeba), this protein is Ras-related protein RabR (rabR).